The following is a 216-amino-acid chain: MRIILLGAPGAGKGTQAQFIMKKYGIVQISTGDMLRAAVKAGTKLGQQVQGIMAAGKLVTDDLVIALVKERIRQEDCKEGFLLDGFPRTIPQADAMAEADIKIDYVLELVVPDEFIVERISGRRVHMPSGRIYHLKFNPPKITDKDDMTGESLTLRKDDQETTVRERLLEYHQQTMALVDYYRQRAKRGDTKYFKLDGTRTVNEVSQQLSSILGES.

ATP is bound at residue 10 to 15; sequence GAGKGT. Residues 30–59 are NMP; it reads STGDMLRAAVKAGTKLGQQVQGIMAAGKLV. AMP is bound by residues Thr31, Arg36, 57-59, 85-88, and Gln92; these read KLV and GFPR. Residues 122-159 form an LID region; the sequence is GRRVHMPSGRIYHLKFNPPKITDKDDMTGESLTLRKDD. Residues Arg123 and 132–133 contribute to the ATP site; that span reads IY. Arg156 and Arg167 together coordinate AMP. An ATP-binding site is contributed by Arg200.

It belongs to the adenylate kinase family. As to quaternary structure, monomer.

The protein resides in the cytoplasm. It carries out the reaction AMP + ATP = 2 ADP. It functions in the pathway purine metabolism; AMP biosynthesis via salvage pathway; AMP from ADP: step 1/1. Catalyzes the reversible transfer of the terminal phosphate group between ATP and AMP. Plays an important role in cellular energy homeostasis and in adenine nucleotide metabolism. The polypeptide is Adenylate kinase (Hamiltonella defensa subsp. Acyrthosiphon pisum (strain 5AT)).